A 464-amino-acid chain; its full sequence is MESRNDEEAPLISASGEDRKVRAGKCYTRDVHILSISFLLIFLAYGAAQNLETTVNKDLGTISLGILYVSFMFCSMVASLVVRLMGSKNALVLGTTGYWLFVAANLKPSWFTMVPASLYLGFAASIIWVGQGTYLTSIARSHATDHGLHEGSVIGVFNGEFWAMFACHQLFGNLITLALLKDGKEGSTSGTTLLMLVFLFSMTLGTILMFFIRKIDGEDGKGPVGSPVGLVDSLASLPRMIITPLLDIRMLLIVPLLAYSGLQQAFVWAEFTKEIVTPAIGVSGVGGAMAVYGALDAVCSMTAGRFTSGLSSITFIVSGGAVAQASVFLWLLLGYRQTSGVLGTAYPLIMAAILGIGDGILNTQISALLALLFKHDTEGAFAQLKVWQSAAIAIVFFLSPYISLQAMLIVMLVMRDFTVEETHFTSSLLFQNSLSRNSLRFRRCLTIKIWDSLPISWESSFSYW.

The next 11 helical transmembrane spans lie at 31–51, 62–82, 84–104, 110–130, 160–180, 192–212, 251–271, 275–295, 313–333, 341–361, and 392–412; these read VHIL…AQNL, ISLG…SLVV, LMGS…FVAA, WFTM…IWVG, EFWA…LALL, TLLM…MFFI, LLIV…WAEF, IVTP…YGAL, ITFI…WLLL, VLGT…DGIL, and IAIV…IVML.

It belongs to the unc-93 family.

Its subcellular location is the membrane. The chain is UNC93-like protein 3 from Arabidopsis thaliana (Mouse-ear cress).